The chain runs to 529 residues: Bifunctional purine biosynthesis protein PurH (529 aa).

An MGS-like domain is found at 1–148 (MNNVRPIRRA…KNHKDTTIVV (148 aa)).

It belongs to the PurH family.

The enzyme catalyses (6R)-10-formyltetrahydrofolate + 5-amino-1-(5-phospho-beta-D-ribosyl)imidazole-4-carboxamide = 5-formamido-1-(5-phospho-D-ribosyl)imidazole-4-carboxamide + (6S)-5,6,7,8-tetrahydrofolate. It catalyses the reaction IMP + H2O = 5-formamido-1-(5-phospho-D-ribosyl)imidazole-4-carboxamide. It functions in the pathway purine metabolism; IMP biosynthesis via de novo pathway; 5-formamido-1-(5-phospho-D-ribosyl)imidazole-4-carboxamide from 5-amino-1-(5-phospho-D-ribosyl)imidazole-4-carboxamide (10-formyl THF route): step 1/1. The protein operates within purine metabolism; IMP biosynthesis via de novo pathway; IMP from 5-formamido-1-(5-phospho-D-ribosyl)imidazole-4-carboxamide: step 1/1. The polypeptide is Bifunctional purine biosynthesis protein PurH (Shewanella frigidimarina (strain NCIMB 400)).